Consider the following 750-residue polypeptide: Sulfhydryl oxidase 1 (750 aa).

Residues 1 to 32 (MGRCNRGSGPPSSLLLLLLLLLWLLAVPGASA) form the signal peptide. One can recognise a Thioredoxin domain in the interval 39–159 (YSPSDPLTLL…RERLIDALES (121 aa)). Catalysis depends on nucleophile residues Cys73 and Cys76. 2 disulfide bridges follow: Cys73/Cys76 and Cys104/Cys113. Residues Asn133 and Asn246 are each glycosylated (N-linked (GlcNAc...) asparagine). Cysteines 396 and 408 form a disulfide. The region spanning 399-506 (SEPHFRGFPC…EDPQFPKVQW (108 aa)) is the ERV/ALR sulfhydryl oxidase domain. Residues Arg404, Trp411, and His415 each contribute to the FAD site. Ser429 carries the post-translational modification Phosphoserine. Cys452 and Cys455 are oxidised to a cystine. FAD contacts are provided by residues Asp454, His458, 481–488 (WSSHNRVN), Lys503, and Trp506. A disulfide bridge connects residues Cys512 and Cys515. N-linked (GlcNAc...) asparagine glycosylation occurs at Asn578. The tract at residues 578-645 (NSTVDLGKPE…REQPRGQWHL (68 aa)) is disordered. Residues 624–639 (PPEHMAELQTNEREQP) are compositionally biased toward basic and acidic residues. The chain crosses the membrane as a helical span at residues 713–733 (ISLCVGLYSLSFMGLLAMYAY).

This sequence belongs to the quiescin-sulfhydryl oxidase (QSOX) family. Monomer. Requires FAD as cofactor. Post-translationally, N-glycosylated. O-glycosylated on Thr and Ser residues.

Its subcellular location is the golgi apparatus membrane. It localises to the secreted. It catalyses the reaction 2 R'C(R)SH + O2 = R'C(R)S-S(R)CR' + H2O2. Its function is as follows. Catalyzes the oxidation of sulfhydryl groups in peptide and protein thiols to disulfides with the reduction of oxygen to hydrogen peroxide. Plays a role in disulfide bond formation in a variety of extracellular proteins. In fibroblasts, required for normal incorporation of laminin into the extracellular matrix, and thereby for normal cell-cell adhesion and cell migration. This chain is Sulfhydryl oxidase 1 (QSOX1), found in Pongo abelii (Sumatran orangutan).